A 419-amino-acid chain; its full sequence is D-amino acid dehydrogenase (419 aa).

Residue 3–17 coordinates FAD; that stretch reads VLVLGAGVAGVSSVW.

It belongs to the DadA oxidoreductase family. FAD serves as cofactor.

The catalysed reaction is a D-alpha-amino acid + A + H2O = a 2-oxocarboxylate + AH2 + NH4(+). The protein operates within amino-acid degradation; D-alanine degradation; NH(3) and pyruvate from D-alanine: step 1/1. Oxidative deamination of D-amino acids. This Neisseria gonorrhoeae (strain ATCC 700825 / FA 1090) protein is D-amino acid dehydrogenase.